The sequence spans 49 residues: Large ribosomal subunit protein eL40 (49 aa).

This sequence belongs to the eukaryotic ribosomal protein eL40 family.

This chain is Large ribosomal subunit protein eL40, found in Methanopyrus kandleri (strain AV19 / DSM 6324 / JCM 9639 / NBRC 100938).